A 205-amino-acid chain; its full sequence is Guanylate kinase (205 aa).

The Guanylate kinase-like domain occupies Gly-6 to Val-185. Arg-13–Gly-20 provides a ligand contact to ATP.

The protein belongs to the guanylate kinase family.

It localises to the cytoplasm. It catalyses the reaction GMP + ATP = GDP + ADP. Its function is as follows. Essential for recycling GMP and indirectly, cGMP. The protein is Guanylate kinase of Bacillus cereus (strain ATCC 14579 / DSM 31 / CCUG 7414 / JCM 2152 / NBRC 15305 / NCIMB 9373 / NCTC 2599 / NRRL B-3711).